A 5537-amino-acid chain; its full sequence is Histone-lysine N-methyltransferase 2D (5537 aa).

The interval 1–60 (MDSQKLAGEDKDSEPAADGPAASEDPSATESDLPNPHVGEVSVLSSGSPRLQETPQDCSG) is disordered. The residue at position 27 (Ser-27) is a Phosphoserine. The segment covering 43–57 (VLSSGSPRLQETPQD) has biased composition (polar residues). A C2HC pre-PHD-type 1; degenerate zinc finger spans residues 104-149 (GPNEAVLPSEDLSQIGFPEGLTPAHLGEPGGSCWAHHWCAAWSAGV). 3 consecutive PHD-type zinc fingers follow at residues 170 to 218 (QRCS…PEHS), 226 to 276 (EARC…CKVC), and 273 to 323 (CKVC…CRVC). The segment at 229-274 (CAVCEGPGELCDLFFCTSCGHHYHGACLDTALTARKRAGWQCPECK) adopts an RING-type 1; atypical zinc-finger fold. The RING-type 2; degenerate zinc-finger motif lies at 276–321 (CQACRKPGNDSKMLVCETCDKGYHTFCLKPPMEELPAHSWKCKACR). Disordered stretches follow at residues 368-387 (VCSR…EPDA), 393-416 (QGQP…QCEA), 436-1331 (EEMP…RLKS), and 1340-1359 (VVAD…DDDT). The 15 X 5 AA repeats of S/P-P-P-E/P-E/A stretch occupies residues 439–668 (PLLPPPEESP…VSRLSPPPEE (230 aa)). The span at 440–473 (LLPPPEESPLSPPPEESPTSPPPEASRLSPPPEE) shows a compositional bias: pro residues. 3 consecutive repeat copies span residues 442-446 (PPPEE), 460-464 (PPPEA), and 469-473 (PPPEE). Low complexity predominate over residues 474–483 (LPASPLPEAL). Residues 494-509 (LSPPPEESPLSPPPES) are compositionally biased toward pro residues. A run of 2 repeats spans residues 496-500 (PPPEE) and 504-508 (SPPPE). A compositionally biased stretch (low complexity) spans 510–519 (SPFSPLEESP). Composition is skewed to pro residues over residues 520–547 (LSPP…PLSP) and 554–595 (LSPP…PPPE). 5 repeat units span residues 521 to 525 (SPPEE), 555 to 559 (SPPPE), 564 to 568 (SPPPE), 573 to 577 (SPPPE), and 582 to 586 (SPPPE). Residues 596–607 (ASRLFPPFEESP) are compositionally biased toward low complexity. Over residues 608–649 (LSPPPEESPLSPPPEASRLSPPPEDSPMSPPPEESPMSPPPE) the composition is skewed to pro residues. Tandem repeats lie at residues 609–613 (SPPPE), 618–622 (SPPPE), 627–631 (SPPPE), and 645–649 (SPPPE). The segment covering 650–662 (VSRLSPLPVVSRL) has biased composition (low complexity). Repeat 15 spans residues 663–667 (SPPPE). The segment covering 663–712 (SPPPEESPLSPPPEESPTSPPPEASRLSPPPEDSPTSPPPEDSPASPPPE) has biased composition (pro residues). Residues 713–725 (DSLMSLPLEESPL) show a composition bias toward low complexity. At Ser-744 the chain carries Phosphoserine. Basic and acidic residues-rich tracts occupy residues 745–760 (PRPE…EEPH) and 845–869 (RPEE…KPPE). Low complexity-rich tracts occupy residues 889–903 (PSLS…LSEP) and 911–928 (LPEE…LSPQ). Residues 929–940 (LMPPDPLPPPLS) are compositionally biased toward pro residues. A compositionally biased stretch (low complexity) spans 941 to 954 (PIITAAAPPALSPL). Over residues 994-1008 (EPVPPMILPPSPGSP) the composition is skewed to pro residues. Residues 1048 to 1057 (PLSVPSPLSP) are compositionally biased toward low complexity. Residues 1068-1080 (AELHEMETEKVSE) are compositionally biased toward basic and acidic residues. Ser-1151 carries the phosphoserine modification. Residue Thr-1195 is modified to Phosphothreonine. A compositionally biased stretch (polar residues) spans 1207–1216 (EISNLSQGDA). Position 1249 is a phosphoserine (Ser-1249). Thr-1267 is subject to Phosphothreonine. Ser-1270 carries the phosphoserine modification. 2 stretches are compositionally biased toward basic residues: residues 1289-1302 (GRRR…RIKQ) and 1310-1329 (GRRR…RARL). PHD-type zinc fingers lie at residues 1377–1430 (QDMC…CIVC), 1427–1477 (CIVC…CVSC), and 1504–1559 (LVTC…CQPY). An RING-type 3; atypical zinc finger spans residues 1507 to 1557 (CPICHAPYVEEDLLIQCRHCERWMHAGCESLFTEDDVEQAADEGFDCVSCQ). Ser-1606 bears the Phosphoserine mark. Disordered regions lie at residues 1610–1767 (KRRQ…LEDM), 1793–1889 (GVGR…MESK), 1904–2002 (EQHL…NQRS), and 2165–2683 (PQVP…QRQR). A compositionally biased stretch (basic and acidic residues) spans 1637-1666 (PDDKKDGDLDTDELLKGEGGVEHMECEIKL). Ser-1671 carries the post-translational modification Phosphoserine. The segment covering 1675–1685 (EPGKEETEESK) has biased composition (basic and acidic residues). Composition is skewed to basic residues over residues 1702-1712 (RQRKSHTRTKK) and 1753-1762 (KQQRRGRKKS). 2 stretches are compositionally biased toward basic and acidic residues: residues 1806-1825 (AKGD…KGDD) and 1832-1841 (EESRGLEGKA). Residues Ser-1820 and Ser-1834 each carry the phosphoserine modification. 2 positions are modified to phosphothreonine: Thr-1843 and Thr-1865. Basic and acidic residues predominate over residues 1874–1889 (DLDRISTEELPKMESK). Over residues 1979–1990 (TTPSTPTTPTTE) the composition is skewed to low complexity. Positions 2190-2209 (PTAPPTYPPYPSPTGAPAQP) are enriched in pro residues. Residue Ser-2239 is modified to Phosphoserine. At Thr-2240 the chain carries Phosphothreonine. Lys-2246 carries the N6-acetyllysine modification. Ser-2260 and Ser-2274 each carry phosphoserine. Residues 2280–2292 (ESRKALEVKKEEL) are compositionally biased toward basic and acidic residues. Residues Ser-2309, Ser-2311, and Ser-2342 each carry the phosphoserine modification. Composition is skewed to pro residues over residues 2350–2365 (QEPP…PPSH) and 2379–2393 (AQPP…PPPE). Low complexity-rich tracts occupy residues 2409–2431 (SRVP…RPLS) and 2494–2505 (FPAALPAGPAGE). Residue Arg-2535 is modified to Asymmetric dimethylarginine. The span at 2547 to 2560 (LKPPVPQPGLPPPH) shows a compositional bias: pro residues. Over residues 2574 to 2584 (KPQSTNYTVAT) the composition is skewed to polar residues. Residues 2589-2609 (PSGSPLGPSSGSTGESYGLSP) are compositionally biased toward low complexity. Residues 2610-2621 (LRPPSVLPPPAP) show a composition bias toward pro residues. Position 2640 is a phosphoserine (Ser-2640). A coiled-coil region spans residues 2669–2707 (MSGLSQTELEKQRQRQRLRELLIRQQIQRNTLRQEKETA). Residues 2686–2690 (LRELL) carry the LXXLL motif 1 motif. Disordered stretches follow at residues 2697–2814 (RNTL…QQQQ) and 2835–2996 (ARFP…LDDD). The span at 2707–2722 (AAAAAGAVGPPGSWGA) shows a compositional bias: low complexity. Composition is skewed to polar residues over residues 2733–2746 (SRGQ…QDKS) and 2781–2790 (PSSMDVNSRQ). The residue at position 2836 (Arg-2836) is an Asymmetric dimethylarginine. Over residues 2931–2940 (PQKPSAPPAP) the composition is skewed to pro residues. An LXXLL motif 2 motif is present at residues 3038–3042 (LDDLL). Residues 3078-3110 (EKAEREALLRGVEPGPLGPEERPPPAADASEPR) form a disordered region. Lys-3079 is subject to N6-acetyllysine. Ser-3130 is modified (phosphoserine). 2 disordered regions span residues 3147-3209 (ANSL…GSSL) and 3263-3339 (KQQL…AHAL). Thr-3197 is modified (phosphothreonine). 3 stretches are compositionally biased toward low complexity: residues 3198–3209 (PSPLSGPGGSSL), 3263–3289 (KQQL…LSAP), and 3301–3320 (GSSP…LAGA). Ser-3199 carries the phosphoserine modification. Residues 3249 to 3282 (IEDLLEHEKKELQKKQQLSAQLQPAQQQQQQQQQ) adopt a coiled-coil conformation. Residues 3325–3334 (LPQPLMPTQP) show a composition bias toward pro residues. Position 3433 is an N6-acetyllysine (Lys-3433). 2 disordered regions span residues 3462 to 3499 (LSGG…TFAQ) and 3596 to 3673 (RNKQ…GPFL). Residues 3562–3614 (EKLKLVTEQQSKIQKQLDQVRKQQKEHTNLMAEYRNKQQQQQQQQQQQQQQHS) adopt a coiled-coil conformation. Composition is skewed to low complexity over residues 3599–3612 (QQQQ…QQQQ) and 3631–3643 (LPGQ…GLQP). Residues 3714 to 3750 (RLLQERQLQLQQQRMQLAQKLQQQQQQQQQQQHLLGQ) are a coiled coil. An Asymmetric dimethylarginine modification is found at Arg-3727. The tract at residues 3758–3802 (QQGPGVQTNQALGPKPQGLMPPSSHQGLLVQQLSPQPPQGPQGML) is disordered. A coiled-coil region spans residues 3897–3975 (LQQLQQQQQL…FQQQQQQQQM (79 aa)). A disordered region spans residues 3984 to 4191 (LLSPQQQQQQ…GQGLPGVGIM (208 aa)). A compositionally biased stretch (low complexity) spans 4012–4023 (PGALGPTLLLTG). Polar residues predominate over residues 4024–4045 (KEQNTVDPAVSSEATEGPSTHQ). Positions 4073-4108 (SQLLLVQPQPQPQPSSLQLQPPLRLPGQQQQQVSLL) are enriched in low complexity. Residues 4111–4120 (AGGGSHGQLG) show a composition bias toward gly residues. The span at 4137–4154 (PSVSLGDQPGSMTQNLLG) shows a compositional bias: polar residues. Asymmetric dimethylarginine is present on Arg-4198. Phosphoserine is present on Ser-4215. Residues 4222-4226 (LQALL) carry the LXXLL motif 3 motif. Disordered stretches follow at residues 4233-4398 (QSQA…VPGH) and 4410-4452 (ASQL…LLLA). Residues 4237-4251 (VRQTPPYQEPGTQTS) show a composition bias toward polar residues. Residues 4252–4282 (PLQGLLGCQPQLGGFPGPQTGPLQELGAGPR) show a composition bias toward low complexity. The short motif at 4253–4257 (LQGLL) is the LXXLL motif 4 element. Over residues 4283-4293 (PQGPPRLPAPP) the composition is skewed to pro residues. Low complexity-rich tracts occupy residues 4294–4305 (GALSTGPVLGPV) and 4320–4331 (PSQLPSPSSQLP). Residues 4338–4357 (PTHPGTPKPQGPTLEPPPGR) show a composition bias toward pro residues. Phosphoserine is present on Ser-4359. An LXXLL motif 5 motif is present at residues 4463 to 4467 (LQKLL). At Lys-4465 the chain carries N6-acetyllysine. Disordered stretches follow at residues 4503–4544 (QGTP…KEDG) and 4613–4727 (KNNL…HLGS). The span at 4619–4633 (PPTPPSSLPPTPPPS) shows a compositional bias: pro residues. Residues 4648–4673 (LGEHPKDAASARDSERALRDTSEVKS) are compositionally biased toward basic and acidic residues. Phosphoserine is present on Ser-4738. Residue Lys-4756 forms a Glycyl lysine isopeptide (Lys-Gly) (interchain with G-Cter in SUMO2) linkage. Lys-4776 is subject to N6-acetyllysine. 2 positions are modified to phosphoserine: Ser-4822 and Ser-4849. Positions 4822 to 4857 (SPARAGTEPKKGEAEGPGGKEKGLEGKSPDTGPDWL) are disordered. The span at 4828 to 4849 (TEPKKGEAEGPGGKEKGLEGKS) shows a compositional bias: basic and acidic residues. Residue Lys-4880 forms a Glycyl lysine isopeptide (Lys-Gly) (interchain with G-Cter in SUMO2) linkage. The tract at residues 4905-4980 (QLSAPPPEEP…GEDSRPPRLK (76 aa)) is disordered. Over residues 4908–4931 (APPPEEPSPPPSPLAPSPASPPTE) the composition is skewed to pro residues. Residues 4932–4941 (PLVELPTEPL) are compositionally biased toward low complexity. Over residues 4966–4976 (RPPEEGEDSRP) the composition is skewed to basic and acidic residues. The short motif at 4990 to 4994 (LRLLL) is the LXXLL motif 6 element. The C2HC pre-PHD-type 2 zinc-finger motif lies at 5029 to 5069 (MRRCCFCHEEGDGATDGPARLLNLDLDLWVHLNCALWSTEV). Residues 5090 to 5137 (TKCSLCQRTGATSSCNRMRCPNVYHFACAIRAKCMFFKDKTMLCPMHK) form a PHD-type 7 zinc finger. The FYR N-terminal domain occupies 5175–5235 (LHMFRVGGLV…CCYRCSIGEN (61 aa)). An FYR C-terminal domain is found at 5236–5321 (NGRPEFVIKV…ESCQNYLFRY (86 aa)). Positions 5337-5342 (GCARSE) match the WDR5 interaction motif (WIN) motif. An SET domain is found at 5397 to 5513 (NNVYLARSRI…KGEELTYDYQ (117 aa)). S-adenosyl-L-methionine is bound by residues Tyr-5451 and 5474-5475 (NH). 4 residues coordinate Zn(2+): Cys-5477, Cys-5525, Cys-5527, and Cys-5532. The region spanning 5521 to 5537 (HKIPCHCGAWNCRKWMN) is the Post-SET domain.

Belongs to the class V-like SAM-binding methyltransferase superfamily. Histone-lysine methyltransferase family. TRX/MLL subfamily. Component of the MLL2 complex (also named ASCOM complex), at least composed of catalytic subunit KMT2D/MLL2, ASH2L, RBBP5, WDR5, NCOA6, DPY30, KDM6A, PAXIP1/PTIP, PAGR1 and alpha- and beta-tubulin. Forms a core complex with the evolutionary conserved subcomplex WRAD composed of WDR5, RBBP5, ASH2L/ASH2 and DPY30 subunits; WRAD differentially stimulates the methyltransferase activity. Interacts with ESR1; interaction is direct. Interacts (via WIN motif) with WDR5. Expressed in most adult tissues, including a variety of hematoipoietic cells, with the exception of the liver.

Its subcellular location is the nucleus. The enzyme catalyses L-lysyl(4)-[histone H3] + S-adenosyl-L-methionine = N(6)-methyl-L-lysyl(4)-[histone H3] + S-adenosyl-L-homocysteine + H(+). Functionally, histone methyltransferase that catalyzes methyl group transfer from S-adenosyl-L-methionine to the epsilon-amino group of 'Lys-4' of histone H3 (H3K4). Part of chromatin remodeling machinery predominantly forms H3K4me1 methylation marks at active chromatin sites where transcription and DNA repair take place. Acts as a coactivator for estrogen receptor by being recruited by ESR1, thereby activating transcription. The chain is Histone-lysine N-methyltransferase 2D (KMT2D) from Homo sapiens (Human).